A 294-amino-acid chain; its full sequence is Release factor glutamine methyltransferase (294 aa).

Glutamate 148 and asparagine 201 together coordinate S-adenosyl-L-methionine. Residue 201 to 204 (NPPY) participates in substrate binding.

Belongs to the protein N5-glutamine methyltransferase family. PrmC subfamily.

The enzyme catalyses L-glutaminyl-[peptide chain release factor] + S-adenosyl-L-methionine = N(5)-methyl-L-glutaminyl-[peptide chain release factor] + S-adenosyl-L-homocysteine + H(+). Methylates the class 1 translation termination release factors RF1/PrfA and RF2/PrfB on the glutamine residue of the universally conserved GGQ motif. This is Release factor glutamine methyltransferase from Bifidobacterium longum (strain NCC 2705).